Consider the following 183-residue polypeptide: GTP cyclohydrolase 1 (183 aa).

Cys-71, His-74, and Cys-142 together coordinate Zn(2+).

Belongs to the GTP cyclohydrolase I family. In terms of assembly, toroid-shaped homodecamer, composed of two pentamers of five dimers.

It catalyses the reaction GTP + H2O = 7,8-dihydroneopterin 3'-triphosphate + formate + H(+). The protein operates within cofactor biosynthesis; 7,8-dihydroneopterin triphosphate biosynthesis; 7,8-dihydroneopterin triphosphate from GTP: step 1/1. This chain is GTP cyclohydrolase 1, found in Leptospira interrogans serogroup Icterohaemorrhagiae serovar copenhageni (strain Fiocruz L1-130).